The following is a 281-amino-acid chain: Elongation factor Ts (281 aa).

Residues Thr80 to Val83 form an involved in Mg(2+) ion dislocation from EF-Tu region.

Belongs to the EF-Ts family.

The protein resides in the cytoplasm. Functionally, associates with the EF-Tu.GDP complex and induces the exchange of GDP to GTP. It remains bound to the aminoacyl-tRNA.EF-Tu.GTP complex up to the GTP hydrolysis stage on the ribosome. The chain is Elongation factor Ts from Aliivibrio fischeri (strain MJ11) (Vibrio fischeri).